The chain runs to 152 residues: Large-conductance mechanosensitive channel (152 aa).

2 consecutive transmembrane segments (helical) span residues Val14–Leu34 and Gly81–Ile101.

This sequence belongs to the MscL family. As to quaternary structure, homopentamer.

The protein resides in the cell membrane. Channel that opens in response to stretch forces in the membrane lipid bilayer. May participate in the regulation of osmotic pressure changes within the cell. The polypeptide is Large-conductance mechanosensitive channel (Clostridium perfringens (strain ATCC 13124 / DSM 756 / JCM 1290 / NCIMB 6125 / NCTC 8237 / Type A)).